The chain runs to 455 residues: Probable galactarate/D-glucarate transporter GudP (455 aa).

The next 12 helical transmembrane spans lie at 19–39, 59–79, 87–107, 108–128, 153–173, 177–197, 253–273, 289–309, 320–340, 348–368, 386–406, and 414–434; these read WFIVFMLFLVTSINYADRATL, YVFSAFGWAYVIGQLPGGWLL, IIALSIFFWSFFTLLQGAIGF, FSAGTAIILLFALRFLVGLSE, AFFNSAQYFAIVIFSPLMGWL, FGWHSVFVVMGIAGILLAVIW, IGVYIAQYCITTLTYFFLTWF, GFVASLPALCGFAGGVLGGIV, LTFARKVPIIAGMLLSCSMIV, WLVVVIMSLAFFGKGFGALGW, LFNTFGNIASITTPIIIGYIV, and GALVFVGANAIAAILSYLLLV.

It belongs to the major facilitator superfamily. Phthalate permease family.

Its subcellular location is the cell membrane. The enzyme catalyses galactarate(in) + H(+)(in) = galactarate(out) + H(+)(out). It catalyses the reaction D-glucarate(in) + H(+)(in) = D-glucarate(out) + H(+)(out). Probably involved in the uptake of galactarate and/or D-glucarate. The sequence is that of Probable galactarate/D-glucarate transporter GudP from Bacillus subtilis (strain 168).